Consider the following 408-residue polypeptide: LL-diaminopimelate aminotransferase (408 aa).

Tyrosine 15 and glycine 42 together coordinate substrate. Pyridoxal 5'-phosphate-binding positions include tyrosine 72, 108–109 (SK), tyrosine 132, asparagine 187, tyrosine 218, and 246–248 (SFS). Residues lysine 109, tyrosine 132, and asparagine 187 each coordinate substrate. Lysine 249 is subject to N6-(pyridoxal phosphate)lysine. Positions 257 and 292 each coordinate pyridoxal 5'-phosphate. Asparagine 292 and arginine 388 together coordinate substrate.

This sequence belongs to the class-I pyridoxal-phosphate-dependent aminotransferase family. LL-diaminopimelate aminotransferase subfamily. As to quaternary structure, homodimer. It depends on pyridoxal 5'-phosphate as a cofactor.

It carries out the reaction (2S,6S)-2,6-diaminopimelate + 2-oxoglutarate = (S)-2,3,4,5-tetrahydrodipicolinate + L-glutamate + H2O + H(+). The protein operates within amino-acid biosynthesis; L-lysine biosynthesis via DAP pathway; LL-2,6-diaminopimelate from (S)-tetrahydrodipicolinate (aminotransferase route): step 1/1. Its function is as follows. Involved in the synthesis of meso-diaminopimelate (m-DAP or DL-DAP), required for both lysine and peptidoglycan biosynthesis. Catalyzes the direct conversion of tetrahydrodipicolinate to LL-diaminopimelate. This is LL-diaminopimelate aminotransferase from Prochlorococcus marinus (strain MIT 9303).